Consider the following 436-residue polypeptide: GTPase Der (436 aa).

EngA-type G domains follow at residues 3-167 (NIVA…PIKP) and 177-352 (PRFA…ENRQ). GTP contacts are provided by residues 9 to 16 (GRPNVGKS), 56 to 60 (DTGGY), 119 to 122 (NKVD), 183 to 190 (GRPNAGKS), 230 to 234 (DTAGI), and 295 to 298 (NKWD). Positions 353-436 (QRISTSKFNE…VPIDIYIREK (84 aa)) constitute a KH-like domain.

It belongs to the TRAFAC class TrmE-Era-EngA-EngB-Septin-like GTPase superfamily. EngA (Der) GTPase family. In terms of assembly, associates with the 50S ribosomal subunit.

Its function is as follows. GTPase that plays an essential role in the late steps of ribosome biogenesis. The polypeptide is GTPase Der (Flavobacterium psychrophilum (strain ATCC 49511 / DSM 21280 / CIP 103535 / JIP02/86)).